Consider the following 497-residue polypeptide: Cytochrome P450 CYP94D108 (497 aa).

The chain crosses the membrane as a helical span at residues 6–26; it reads LLSLALLLLAAAAAAAFVLFP. Cysteine 439 lines the heme pocket.

This sequence belongs to the cytochrome P450 family. As to expression, mainly expressed in roots and, at low levels, in leaves, fruits and stems.

It is found in the membrane. The protein operates within steroid metabolism; cholesterol metabolism. Functionally, involved in the biosynthesis of spiroketal steroid and saponin natural products from cholesterol such as diosgenin and analogs (e.g. furostanol and spirostanol), plant defense compounds used as main precursors for the industrial production of steroid hormones. During the 5,6-spiroketalization of cholesterol, may catalyze the 27-monohydroxylation of furostanol-type steroid to an intermediate product that undergoes a stereospecific formation of the terminal heterocycle to yield diosgenin. In Paris polyphylla (Daiswa polyphylla), this protein is Cytochrome P450 CYP94D108.